Reading from the N-terminus, the 272-residue chain is Putative pyruvate, phosphate dikinase regulatory protein (272 aa).

151–158 (GISRTSKT) contributes to the ADP binding site.

It belongs to the pyruvate, phosphate/water dikinase regulatory protein family. PDRP subfamily.

It carries out the reaction N(tele)-phospho-L-histidyl/L-threonyl-[pyruvate, phosphate dikinase] + ADP = N(tele)-phospho-L-histidyl/O-phospho-L-threonyl-[pyruvate, phosphate dikinase] + AMP + H(+). It catalyses the reaction N(tele)-phospho-L-histidyl/O-phospho-L-threonyl-[pyruvate, phosphate dikinase] + phosphate + H(+) = N(tele)-phospho-L-histidyl/L-threonyl-[pyruvate, phosphate dikinase] + diphosphate. In terms of biological role, bifunctional serine/threonine kinase and phosphorylase involved in the regulation of the pyruvate, phosphate dikinase (PPDK) by catalyzing its phosphorylation/dephosphorylation. The protein is Putative pyruvate, phosphate dikinase regulatory protein of Staphylococcus aureus (strain USA300).